The following is a 257-amino-acid chain: UPF0246 protein CLH_2088 (257 aa).

The protein belongs to the UPF0246 family.

This Clostridium botulinum (strain Alaska E43 / Type E3) protein is UPF0246 protein CLH_2088.